The primary structure comprises 212 residues: Putative 3-methyladenine DNA glycosylase (212 aa).

It belongs to the DNA glycosylase MPG family.

The protein is Putative 3-methyladenine DNA glycosylase of Frankia casuarinae (strain DSM 45818 / CECT 9043 / HFP020203 / CcI3).